The primary structure comprises 590 residues: G protein-coupled receptor kinase 5 (590 aa).

The segment at 1-185 (MELENIVANT…LERQPVTKNT (185 aa)) is N-terminal. Residues 20-39 (GGKRKGKSKKWKEILKFPHI) form an interaction with calmodulin region. Residues 53–171 (YCSLCDKQPV…LDSMYFDRFL (119 aa)) enclose the RGS domain. Positions 186–448 (FRQYRVLGKG…AAEVKRHPFF (263 aa)) constitute a Protein kinase domain. ATP contacts are provided by residues 192–200 (LGKGGFGEV) and Lys-215. Residue Asp-311 is the Proton acceptor of the active site. The Nuclear localization signal signature appears at 388 to 395 (RKEKVKRE). The AGC-kinase C-terminal domain maps to 449–514 (RNMNFKRLEA…GSVPIPWQSE (66 aa)). A Phosphoserine; by autocatalysis modification is found at Ser-484. Residue Thr-485 is modified to Phosphothreonine; by autocatalysis. Positions 546–565 (PKKGLLQRLFKRQHQNNSKS) are sufficient for membrane localization. Residues 554–590 (LFKRQHQNNSKSSPNSKTSFNHHINSNHVSSNSTGSS) are disordered. Positions 561–590 (NNSKSSPNSKTSFNHHINSNHVSSNSTGSS) are enriched in low complexity. Ser-579 carries the phosphoserine modification.

This sequence belongs to the protein kinase superfamily. AGC Ser/Thr protein kinase family. GPRK subfamily. Interacts with ST13 (via the C-terminus 303-319 AA). Interacts with TP53/p53. Interacts with HTR4 (via C-terminus 330-346 AA); this interaction is promoted by 5-HT (serotonin). Interacts with HDAC5. Interacts with GIT1. In terms of processing, autophosphorylated. Autophosphorylation may play a critical role in the regulation of GRK5 kinase activity. Highest levels in lung, heart, retina, lingual epithelium. Very little in brain, liver, kidney.

It localises to the cytoplasm. It is found in the nucleus. Its subcellular location is the cell membrane. The catalysed reaction is [G-protein-coupled receptor] + ATP = [G-protein-coupled receptor]-phosphate + ADP + H(+). Its activity is regulated as follows. Inhibited by calmodulin with an IC(50) of 50 nM. Calmodulin inhibits GRK5 association with receptor and phospholipid. Its function is as follows. Serine/threonine kinase that phosphorylates preferentially the activated forms of a variety of G-protein-coupled receptors (GPCRs). Such receptor phosphorylation initiates beta-arrestin-mediated receptor desensitization, internalization, and signaling events leading to their down-regulation. Phosphorylates a variety of GPCRs, including adrenergic receptors (Beta-2 adrenergic receptor), muscarinic acetylcholine receptors (more specifically Gi-coupled M2/M4 subtypes), dopamine receptors and opioid receptors. In addition to GPCRs, also phosphorylates various substrates: Hsc70-interacting protein/ST13, TP53/p53, HDAC5, and arrestin-1/ARRB1. Phosphorylation of ARRB1 by GRK5 inhibits G-protein independent MAPK1/MAPK3 signaling downstream of 5HT4-receptors. Phosphorylation of HDAC5, a repressor of myocyte enhancer factor 2 (MEF2) leading to nuclear export of HDAC5 and allowing MEF2-mediated transcription. Phosphorylation of TP53/p53, a crucial tumor suppressor, inhibits TP53/p53-mediated apoptosis. Phosphorylation of ST13 regulates internalization of the chemokine receptor. Phosphorylates rhodopsin (RHO) (in vitro) and a non G-protein-coupled receptor, LRP6 during Wnt signaling (in vitro). The protein is G protein-coupled receptor kinase 5 (GRK5) of Bos taurus (Bovine).